The primary structure comprises 273 residues: Nitrogenase iron protein 4 (273 aa).

8 to 15 (GKGGIGKS) is an ATP binding site. C94 provides a ligand contact to [4Fe-4S] cluster. R97 carries the ADP-ribosylarginine; by dinitrogenase reductase ADP-ribosyltransferase modification. C129 serves as a coordination point for [4Fe-4S] cluster.

This sequence belongs to the NifH/BchL/ChlL family. Homodimer. [4Fe-4S] cluster serves as cofactor. In terms of processing, the reversible ADP-ribosylation of Arg-97 inactivates the nitrogenase reductase and regulates nitrogenase activity.

It carries out the reaction N2 + 8 reduced [2Fe-2S]-[ferredoxin] + 16 ATP + 16 H2O = H2 + 8 oxidized [2Fe-2S]-[ferredoxin] + 2 NH4(+) + 16 ADP + 16 phosphate + 6 H(+). Its function is as follows. The key enzymatic reactions in nitrogen fixation are catalyzed by the nitrogenase complex, which has 2 components: the iron protein and the molybdenum-iron protein. In Clostridium pasteurianum, this protein is Nitrogenase iron protein 4 (nifH4).